The primary structure comprises 337 residues: Tetraacyldisaccharide 4'-kinase (337 aa).

Residue 55–62 (TAGGNGKT) participates in ATP binding.

Belongs to the LpxK family.

It catalyses the reaction a lipid A disaccharide + ATP = a lipid IVA + ADP + H(+). It participates in glycolipid biosynthesis; lipid IV(A) biosynthesis; lipid IV(A) from (3R)-3-hydroxytetradecanoyl-[acyl-carrier-protein] and UDP-N-acetyl-alpha-D-glucosamine: step 6/6. Transfers the gamma-phosphate of ATP to the 4'-position of a tetraacyldisaccharide 1-phosphate intermediate (termed DS-1-P) to form tetraacyldisaccharide 1,4'-bis-phosphate (lipid IVA). This is Tetraacyldisaccharide 4'-kinase from Sodalis glossinidius (strain morsitans).